Reading from the N-terminus, the 153-residue chain is Deoxyuridine 5'-triphosphate nucleotidohydrolase (153 aa).

Residues 65-67 (RSG), N78, and 82-84 (TID) each bind substrate. The tract at residues 132–153 (MTQRGEGGFGHTGISAVHPRTH) is disordered.

This sequence belongs to the dUTPase family. Mg(2+) serves as cofactor.

The enzyme catalyses dUTP + H2O = dUMP + diphosphate + H(+). Its pathway is pyrimidine metabolism; dUMP biosynthesis; dUMP from dCTP (dUTP route): step 2/2. This enzyme is involved in nucleotide metabolism: it produces dUMP, the immediate precursor of thymidine nucleotides and it decreases the intracellular concentration of dUTP so that uracil cannot be incorporated into DNA. The protein is Deoxyuridine 5'-triphosphate nucleotidohydrolase of Chlorobium limicola (strain DSM 245 / NBRC 103803 / 6330).